The chain runs to 304 residues: N-acetylmuramic acid 6-phosphate etherase (304 aa).

The SIS domain maps to 58–221 (IAERIHRGGR…STGVMIKLGK (164 aa)). The Proton donor role is filled by Glu86. Glu117 is a catalytic residue.

Belongs to the GCKR-like family. MurNAc-6-P etherase subfamily. In terms of assembly, homodimer.

It carries out the reaction N-acetyl-D-muramate 6-phosphate + H2O = N-acetyl-D-glucosamine 6-phosphate + (R)-lactate. Its pathway is amino-sugar metabolism; N-acetylmuramate degradation. Its function is as follows. Specifically catalyzes the cleavage of the D-lactyl ether substituent of MurNAc 6-phosphate, producing GlcNAc 6-phosphate and D-lactate. In Clostridium beijerinckii (strain ATCC 51743 / NCIMB 8052) (Clostridium acetobutylicum), this protein is N-acetylmuramic acid 6-phosphate etherase.